Reading from the N-terminus, the 309-residue chain is Ferrochelatase (309 aa).

Residues histidine 185 and glutamate 262 each contribute to the Fe cation site.

Belongs to the ferrochelatase family.

It is found in the cytoplasm. It carries out the reaction heme b + 2 H(+) = protoporphyrin IX + Fe(2+). The protein operates within porphyrin-containing compound metabolism; protoheme biosynthesis; protoheme from protoporphyrin-IX: step 1/1. Its function is as follows. Catalyzes the ferrous insertion into protoporphyrin IX. The protein is Ferrochelatase of Campylobacter jejuni subsp. jejuni serotype O:23/36 (strain 81-176).